A 133-amino-acid chain; its full sequence is Small ribosomal subunit protein uS9 (133 aa).

Residues 98–113 (RKPLKTEGHLSRDPRA) are compositionally biased toward basic and acidic residues. Residues 98–133 (RKPLKTEGHLSRDPRAKERRKYGLKKARKAPQFSKR) form a disordered region. Residues 114-133 (KERRKYGLKKARKAPQFSKR) show a composition bias toward basic residues.

This sequence belongs to the universal ribosomal protein uS9 family.

The polypeptide is Small ribosomal subunit protein uS9 (Parasynechococcus marenigrum (strain WH8102)).